The chain runs to 417 residues: Phosphoglycerate kinase 1 (417 aa).

(2R)-3-phosphoglycerate is bound by residues V23, D24, F25, N26, N38, R39, S62, H63, G65, R66, L121, R122, H168, and R169. G212 provides a ligand contact to ADP. G212 serves as a coordination point for CDP. Positions 213 and 214 each coordinate AMP. Residue A213 participates in ATP binding. A Mg(2+)-binding site is contributed by A213. D217 contributes to the CDP binding site. D217 provides a ligand contact to Mg(2+). An AMP-binding site is contributed by K218. K218 is an ATP binding site. G236 lines the ADP pocket. G236 contacts CDP. G237 and G311 together coordinate AMP. ATP is bound by residues G237 and G311. The CDP site is built by G336 and F341. F341 lines the ADP pocket. E342 is an AMP binding site. Residues E342, D374, and T375 each contribute to the ATP site. D374 serves as a coordination point for Mg(2+).

It belongs to the phosphoglycerate kinase family. Monomer. Requires Mg(2+) as cofactor.

Its subcellular location is the cytoplasm. The protein localises to the mitochondrion. It carries out the reaction (2R)-3-phosphoglycerate + ATP = (2R)-3-phospho-glyceroyl phosphate + ADP. Its pathway is carbohydrate degradation; glycolysis; pyruvate from D-glyceraldehyde 3-phosphate: step 2/5. Functionally, catalyzes one of the two ATP producing reactions in the glycolytic pathway via the reversible conversion of 1,3-diphosphoglycerate to 3-phosphoglycerate. Both L- and D- forms of purine and pyrimidine nucleotides can be used as substrates, but the activity is much lower on pyrimidines. Negatively regulates the biosynthesis of acetyl-CoA from pyruvate in the mitochondrion. The protein is Phosphoglycerate kinase 1 (PGK1) of Rhizopus niveus.